The chain runs to 232 residues: UPF0758 protein FN0909 (232 aa).

The MPN domain occupies 110–232; it reads KISNKDILLK…YFSFLEEGLI (123 aa). Residues His181, His183, and Asp194 each coordinate Zn(2+). The JAMM motif motif lies at 181–194; it reads HNHPSDNITPSKSD.

Belongs to the UPF0758 family.

This chain is UPF0758 protein FN0909, found in Fusobacterium nucleatum subsp. nucleatum (strain ATCC 25586 / DSM 15643 / BCRC 10681 / CIP 101130 / JCM 8532 / KCTC 2640 / LMG 13131 / VPI 4355).